Consider the following 350-residue polypeptide: MSQLQVRHDWKREEIEALFALPMNDLLFKAHSIHREEYDPNEVQISRLLSIKTGACPEDCKYCPQSARYDTGLEKERLLAMETVLTEARSAKAAGASRFCMGAAWRNPKDKDMPYLKQMVQEVKALGMETCMTLGMLSAEQANELAEAGLDYYNHNLDTSPEYYGDVITTRTYQNRLDTLSHVRASGMKVCSGGIVGMGEKATDRAGLLQQLANLPQHPDSVPINMLVKVAGTPFEKLDDLDPLEFVRTIAVARILMPLSRVRLSAGRENMSDELQAMCFFAGANSIFYGCKLLTTPNPEESDDMGLFRRLGLRPEQGAAASIDDEQAVLAKAAAYQDKASAQFYDAAAL.

The Radical SAM core domain maps to 41-268 (NEVQISRLLS…LSRVRLSAGR (228 aa)). Positions 56, 60, and 63 each coordinate [4Fe-4S] cluster. [2Fe-2S] cluster is bound by residues Cys100, Cys131, Cys191, and Arg263.

This sequence belongs to the radical SAM superfamily. Biotin synthase family. In terms of assembly, homodimer. Requires [4Fe-4S] cluster as cofactor. [2Fe-2S] cluster is required as a cofactor.

It catalyses the reaction (4R,5S)-dethiobiotin + (sulfur carrier)-SH + 2 reduced [2Fe-2S]-[ferredoxin] + 2 S-adenosyl-L-methionine = (sulfur carrier)-H + biotin + 2 5'-deoxyadenosine + 2 L-methionine + 2 oxidized [2Fe-2S]-[ferredoxin]. It functions in the pathway cofactor biosynthesis; biotin biosynthesis; biotin from 7,8-diaminononanoate: step 2/2. In terms of biological role, catalyzes the conversion of dethiobiotin (DTB) to biotin by the insertion of a sulfur atom into dethiobiotin via a radical-based mechanism. This is Biotin synthase from Shewanella oneidensis (strain ATCC 700550 / JCM 31522 / CIP 106686 / LMG 19005 / NCIMB 14063 / MR-1).